Consider the following 379-residue polypeptide: GTP cyclohydrolase 1 type 2 homolog (379 aa).

Positions 64, 65, 103, 333, and 337 each coordinate a divalent metal cation.

It belongs to the GTP cyclohydrolase I type 2/NIF3 family. In terms of assembly, homohexamer.

This chain is GTP cyclohydrolase 1 type 2 homolog, found in Mycobacterium bovis (strain ATCC BAA-935 / AF2122/97).